Reading from the N-terminus, the 511-residue chain is Voltage-gated potassium channel KCNC1 (511 aa).

The Cytoplasmic segment spans residues Met-1–Arg-190. At Ser-44 the chain carries Phosphoserine. His-77, Cys-83, Cys-104, and Cys-105 together coordinate Zn(2+). A disordered region spans residues Ser-121–Asp-147. Phosphoserine occurs at positions 130, 142, 158, and 160. A compositionally biased stretch (acidic residues) spans Ser-130 to Asp-147. Residues Tyr-191 to Leu-209 traverse the membrane as a helical segment. N-linked (GlcNAc...) asparagine glycosylation is found at Asn-220 and Asn-229. The helical transmembrane segment at Ile-248–Cys-267 threads the bilayer. Over Pro-268–Asn-276 the chain is Cytoplasmic. The chain crosses the membrane as a helical span at residues Ser-277–Leu-295. The chain crosses the membrane as a helical; Voltage-sensor span at residues Phe-309–Leu-331. Topologically, residues Arg-332–Glu-344 are cytoplasmic. Residues Phe-345–Ala-366 traverse the membrane as a helical segment. Residues Thr-400, Leu-401, Gly-402, and Tyr-403 each coordinate K(+). The Selectivity filter signature appears at Thr-400–Asp-405. A helical membrane pass occupies residues Leu-415 to Val-436. Over Asn-437 to Ile-511 the chain is Cytoplasmic. A Phosphoserine modification is found at Ser-474. Thr-483 is modified (phosphothreonine).

The protein belongs to the potassium channel family. C (Shaw) (TC 1.A.1.2) subfamily. Kv3.1/KCNC1 sub-subfamily. Homotetramer. Homomultimer. Heteromultimer with KCNG3, KCNG4 and KCNV2. Heteromultimer with KCNC2. Heterotetramer with KCNC3. Interacts with the ancillary subunits KCNE1 and KCNE2; the interaction modulates channel activity. In terms of processing, N-glycosylated; contains sialylated glycans. Detected in cerebellum. Detected in brain (at protein level). Detected in brain.

The protein localises to the cell membrane. It localises to the cell projection. Its subcellular location is the axon. It is found in the presynaptic cell membrane. It carries out the reaction K(+)(in) = K(+)(out). Its function is as follows. Voltage-gated potassium channel that opens in response to the voltage difference across the membrane and through which potassium ions pass in accordance with their electrochemical gradient. The mechanism is time-dependent and inactivation is slow. Plays an important role in the rapid repolarization of fast-firing brain neurons. Can form functional homotetrameric channels and heterotetrameric channels that contain variable proportions of KCNC2, and possibly other family members as well. Contributes to fire sustained trains of very brief action potentials at high frequency in pallidal neurons. This chain is Voltage-gated potassium channel KCNC1, found in Mus musculus (Mouse).